Consider the following 329-residue polypeptide: uncharacterized protein (329 aa).

The next 7 helical transmembrane spans lie at 29–49 (IVLWALFVFCAIATAFLAISH), 78–98 (VLVAQILTPIFTVLLILCWMG), 120–140 (KKWLLWAIFIPQLTLTNSLLV), 164–184 (WMIGFFVVWFIQLFLGFLIYL), 217–237 (YFFLGLIFAFMDLTIIVLLVI), 260–280 (FFWTALAIDVIGLIMTISFIV), and 299–319 (GSSLMALITIATLVTTILLFI).

To M.pneumoniae MPN_129.

The protein localises to the cell membrane. This is an uncharacterized protein from Mycoplasma pneumoniae (strain ATCC 29342 / M129 / Subtype 1) (Mycoplasmoides pneumoniae).